The sequence spans 371 residues: Cyanide hydratase (371 aa).

Residues 8–286 form the CN hydrolase domain; the sequence is YKAAAVQAEP…EGLMFVEIDL (279 aa). Residue Glu-48 is the Proton acceptor of the active site. Lys-130 is an active-site residue. Cys-165 acts as the Nucleophile in catalysis. Residues 326–356 are disordered; that stretch reads DGGIGTYNTQDRVGLNRPLDAPKVDGPSGVS.

It belongs to the carbon-nitrogen hydrolase superfamily. Nitrilase family. Oligomer of dimers, forming left-handed helical fibers.

It catalyses the reaction formamide = hydrogen cyanide + H2O. Catalyzes the hydration of cyanide to formamide. Degradation of cyanide may be important for plant pathogenic fungi in infection of cyanogenic plants. Can also transform some nitriles like 2-cyanopyridine and fumaronitrile and has a minor activity with 4-cyanophenyl acetonitrile (4-CPA). The sequence is that of Cyanide hydratase from Botryotinia fuckeliana (strain T4) (Noble rot fungus).